A 317-amino-acid polypeptide reads, in one-letter code: DNA repair nuclease/redox regulator APEX1 (317 aa).

The tract at residues 1–58 is disordered; the sequence is MPKRGKKAAADDGEEPKSEPETKKSKGAAKKTEKEAAGEGPVLYEDPPDQKTSPSGKS. Residues 2 to 32 are necessary for interaction with YBX1, binding to RNA, association together with NPM1 to rRNA, endoribonuclease activity on abasic RNA and localization in the nucleoli; it reads PKRGKKAAADDGEEPKSEPETKKSKGAAKKT. 2 positions are modified to N6-acetyllysine; by EP300: Lys6 and Lys7. A Nuclear localization signal (NLS) motif is present at residues 8–12; that stretch reads AAADD. The span at 15–37 shows a compositional bias: basic and acidic residues; that stretch reads EPKSEPETKKSKGAAKKTEKEAA. Phosphoserine is present on Ser18. The necessary for interaction with NPM1 and for efficient rRNA binding stretch occupies residues 22–32; sequence TKKSKGAAKKT. 4 positions are modified to N6-acetyllysine: Lys26, Lys30, Lys31, and Lys34. Phosphoserine is present on Ser53. A Nuclear export signal (NES) motif is present at residues 63–79; that stretch reads ICSWNVDGLRAWIKKKG. Cys64 is modified (S-nitrosocysteine; alternate). Residues Cys64 and Cys92 are joined by a disulfide bond. Asp69 contributes to the Mg(2+) binding site. Residue Cys92 is modified to S-nitrosocysteine; alternate. Glu95 is a Mg(2+) binding site. Residue Tyr170 is part of the active site. An N6-acetyllysine modification is found at Lys196. Residues Asp209 and Asn211 each coordinate Mg(2+). Catalysis depends on Asp209, which acts as the Proton donor/acceptor. At Thr232 the chain carries Phosphothreonine; by CDK5. The segment at 288–317 is mitochondrial targeting sequence (MTS); sequence HSLLPALCDSKIRSKALGSDHCPITLYLAL. A Mg(2+)-binding site is contributed by Asp307. Cys309 carries the post-translational modification S-nitrosocysteine.

It belongs to the DNA repair enzymes AP/ExoA family. As to quaternary structure, monomer. Homodimer; disulfide-linked. Component of the SET complex, composed of at least APEX1, SET, ANP32A, HMGB2, NME1 and TREX1. Associates with the dimer XRCC5/XRCC6 in a DNA-dependent manner. Interacts with SIRT1; the interaction is increased in the context of genotoxic stress. Interacts with HDAC1, HDAC2 and HDAC3; the interactions are not dependent on the APEX1 acetylation status. Interacts with XRCC1; the interaction is induced by SIRT1 and increased with the APEX1 acetylated form. Interacts with NPM1 (via N-terminal domain); the interaction is RNA-dependent and decreases in hydrogen peroxide-damaged cells. Interacts (via N-terminus) with YBX1 (via C-terminus); the interaction is increased in presence of APEX1 acetylated at Lys-6 and Lys-7. Interacts with HNRNPL; the interaction is DNA-dependent. Interacts (via N-terminus) with KPNA1 and KPNA2. Interacts with TXN; the interaction stimulates the FOS/JUN AP-1 complex DNA-binding activity in a redox-dependent manner. Interacts with GZMA, KRT8, MDM2, POLB, PRDX6, PRPF19, RPLP0, TOMM20 and WDR77. Binds to CDK5. The cofactor is Mg(2+). It depends on Mn(2+) as a cofactor. In terms of processing, phosphorylated. Phosphorylation by kinase PKC or casein kinase CK2 results in enhanced redox activity that stimulates binding of the FOS/JUN AP-1 complex to its cognate binding site. AP-endodeoxyribonuclease activity is not affected by CK2-mediated phosphorylation. Phosphorylation of Thr-232 by CDK5 in response to MPP(+)/MPTP (1-methyl-4-phenylpyridinium) reduces AP-endodeoxyribonuclease activity resulting in accumulation of DNA damage and contributing to neuronal death. Post-translationally, acetylated on Lys-6 and Lys-7. Acetylation is increased by the transcriptional coactivator EP300 acetyltransferase, genotoxic agents like H(2)O(2) and methyl methanesulfonate (MMS). Acetylation increases its binding affinity to the negative calcium response element (nCaRE) DNA promoter. The acetylated form induces a stronger binding of YBX1 to the Y-box sequence in the MDR1 promoter than the unacetylated form. Deacetylated on lysines. Lys-6 and Lys-7 are deacetylated by SIRT1. Cleaved at Lys-30 by granzyme A to create the mitochondrial form; leading in reduction of binding to DNA, AP endodeoxyribonuclease activity, redox activation of transcription factors and to enhanced cell death. Cleaved by granzyme K; leading to intracellular ROS accumulation and enhanced cell death after oxidative stress. In terms of processing, cys-64 and Cys-92 are nitrosylated in response to nitric oxide (NO) and lead to the exposure of the nuclear export signal (NES). Post-translationally, ubiquitinated by MDM2; leading to translocation to the cytoplasm and proteasomal degradation. In terms of tissue distribution, expressed in both resting and stimulated B cells stimulated to switch (at protein level).

It localises to the nucleus. The protein localises to the nucleolus. The protein resides in the nucleus speckle. Its subcellular location is the endoplasmic reticulum. It is found in the cytoplasm. It localises to the mitochondrion. The catalysed reaction is a deoxyribonucleotide-2'-deoxyribose-5'-monophosphate-DNA + H2O = a 5'-end 2'-deoxyribose-5'-monophosphate-DNA + a 3'-end 2'-deoxyribonucleotide-DNA + H(+). The enzyme catalyses Exonucleolytic cleavage in the 3'- to 5'-direction to yield nucleoside 5'-phosphates.. It catalyses the reaction a 3'-end 2'-deoxyribonucleotide-3'-phosphoglycolate-DNA + H2O = 2-phosphoglycolate + a 3'-end 2'-deoxyribonucleotide-DNA + H(+). It carries out the reaction a 3'-end 2'-deoxyribonucleotide-8-oxoguanine-DNA + H2O = 8-oxo-dGMP + a 3'-end 2'-deoxyribonucleotide-DNA + H(+). With respect to regulation, NPM1 stimulates endodeoxyribonuclease activity on double-stranded DNA with AP sites, but inhibits endoribonuclease activity on single-stranded RNA containing AP sites. Functionally, multifunctional protein that plays a central role in the cellular response to oxidative stress. The two major activities of APEX1 are DNA repair and redox regulation of transcriptional factors. Functions as an apurinic/apyrimidinic (AP) endodeoxyribonuclease in the base excision repair (BER) pathway of DNA lesions induced by oxidative and alkylating agents. Initiates repair of AP sites in DNA by catalyzing hydrolytic incision of the phosphodiester backbone immediately adjacent to the damage, generating a single-strand break with 5'-deoxyribose phosphate and 3'-hydroxyl ends. Also incises at AP sites in the DNA strand of DNA/RNA hybrids, single-stranded DNA regions of R-loop structures, and single-stranded RNA molecules. Operates at switch sites of immunoglobulin (Ig) constant regions where it mediates Ig isotype class switch recombination. Processes AP sites induced by successive action of AICDA and UNG. Generates staggered nicks in opposite DNA strands resulting in the formation of double-strand DNA breaks that are finally resolved via non-homologous end joining repair pathway. Has 3'-5' exodeoxyribonuclease activity on mismatched deoxyribonucleotides at the 3' termini of nicked or gapped DNA molecules during short-patch BER. Possesses DNA 3' phosphodiesterase activity capable of removing lesions (such as phosphoglycolate and 8-oxoguanine) blocking the 3' side of DNA strand breaks. Also acts as an endoribonuclease involved in the control of single-stranded RNA metabolism. Plays a role in regulating MYC mRNA turnover by preferentially cleaving in between UA and CA dinucleotides of the MYC coding region determinant (CRD). In association with NMD1, plays a role in the rRNA quality control process during cell cycle progression. Acts as a loading factor for POLB onto non-incised AP sites in DNA and stimulates the 5'-terminal deoxyribose 5'-phosphate (dRp) excision activity of POLB. Exerts reversible nuclear redox activity to regulate DNA binding affinity and transcriptional activity of transcriptional factors by controlling the redox status of their DNA-binding domain, such as the FOS/JUN AP-1 complex after exposure to IR. Involved in calcium-dependent down-regulation of parathyroid hormone (PTH) expression by binding to negative calcium response elements (nCaREs). Together with HNRNPL or the dimer XRCC5/XRCC6, associates with nCaRE, acting as an activator of transcriptional repression. May also play a role in the epigenetic regulation of gene expression by participating in DNA demethylation. Stimulates the YBX1-mediated MDR1 promoter activity, when acetylated at Lys-6 and Lys-7, leading to drug resistance. Plays a role in protection from granzyme-mediated cellular repair leading to cell death. Binds DNA and RNA. Associates, together with YBX1, on the MDR1 promoter. Together with NPM1, associates with rRNA. This Mus musculus (Mouse) protein is DNA repair nuclease/redox regulator APEX1 (Apex1).